The primary structure comprises 459 residues: Kelch-like protein terF (459 aa).

Kelch repeat units follow at residues S92–D144, E145–G196, I198–V248, T251–D304, L306–S354, and L355–G405.

The protein operates within secondary metabolite biosynthesis. Its function is as follows. Kelch-like protein; part of the gene cluster that mediates the biosynthesis of terrein, a fungal metabolite with ecological, antimicrobial, antiproliferative, and antioxidative activities. The first step in the pathway is performed by the polyketide synthase terA that produces 4-hydroxy-6-methylpyranon (4-HMP), orsellinic acid (OA), and 2,3-dehydro-6-hydroxymellein (2,3-dehydro-6-HM) by condensing acetyl-CoA with two, three, or four malonyl-CoA units, respectively. 4-HMP and OA are not pathway intermediates, but are rather shunt or side products. 2,3-dehydro-6-HM is further converted to 6-hydroxymellein (6-HM) by the 6-hydroxymellein synthase terB. The monooxygenases terC and terD, the multicopper oxidase terE and the Kelch-like protein terF are then involved in the transformation of 6-HM to terrein. Even if they are co-regulated with the other terrein cluster genes, terH and terI seem to be dispensable for terrein production; whereas one or both of the 2 transporters terG and terJ are probably required for efficient secretion of metabolites. The protein is Kelch-like protein terF of Aspergillus terreus (strain NIH 2624 / FGSC A1156).